Here is a 202-residue protein sequence, read N- to C-terminus: Response regulator RamR (202 aa).

Residues 1–121 form a response regulatory region; sequence MGEMVRIAVV…LITAVHTVAR (121 aa). The HTH luxR-type domain occupies 135 to 200; that stretch reads LKGAEMPLTT…DAIRIVQSAG (66 aa). The segment at residues 159–178 is a DNA-binding region (H-T-H motif); it reads IAEIAARLHLSRGTVRNYMA.

Homodimer, in the absence of phosphorylation. In terms of processing, may be phosphorylated by an unknown kinase, probably on Asp-56.

Its function is as follows. A transcription factor required for aerial hyphae formation on rich medium. Activates transcription of ramC. Might be part of a two-component regulatory system. Binds the promoter of ramC. Non-phosphorylated protein cooperatively binds multiple sites in the ramC promoter. Has not been seen to autophosphorylate using the small molecule phosphodonors phosphoramidate, acetyl phosphate or carbamoyl phosphate. Upon low expression suppresses the bald (bld, no aerial hyphae) phenotype of citA but not bldJ mutants; higher expression also suppresses the bldJ mutant as well as several other bld mutations, inducing SapB production even on media where SapB is normally not produced. Expression of the ram locus (ramA, ramB and ramR) induces rapid aerial mycelium formation in S.lividans. Overexpression suppresses the no aerial hyphae phenotype of a chaplin-negative strain, probably by inducing expression of SapB. Overexpression of RamR show there are about 280 genes having at least a threefold increase or fourfold decrease in RNA abundance versus wild-type including gene cluster SCO4072-SCO4075. This chain is Response regulator RamR, found in Streptomyces coelicolor (strain ATCC BAA-471 / A3(2) / M145).